A 482-amino-acid chain; its full sequence is Glutamate--tRNA ligase (482 aa).

The 'HIGH' region motif lies at 10–20 (PSPTGFLHIGN). The 'KMSKS' region motif lies at 253–257 (KLSKR). Residue Lys256 coordinates ATP.

Belongs to the class-I aminoacyl-tRNA synthetase family. Glutamate--tRNA ligase type 1 subfamily. Monomer.

The protein resides in the cytoplasm. The enzyme catalyses tRNA(Glu) + L-glutamate + ATP = L-glutamyl-tRNA(Glu) + AMP + diphosphate. In terms of biological role, catalyzes the attachment of glutamate to tRNA(Glu) in a two-step reaction: glutamate is first activated by ATP to form Glu-AMP and then transferred to the acceptor end of tRNA(Glu). The chain is Glutamate--tRNA ligase from Mesoplasma florum (strain ATCC 33453 / NBRC 100688 / NCTC 11704 / L1) (Acholeplasma florum).